Here is a 199-residue protein sequence, read N- to C-terminus: uncharacterized protein (199 aa).

Residues 21-38 form a helical membrane-spanning segment; that stretch reads ISPSATNFIVSLVIMILI.

Its subcellular location is the membrane. This is an uncharacterized protein from Saccharomyces cerevisiae (strain ATCC 204508 / S288c) (Baker's yeast).